The sequence spans 159 residues: uncharacterized protein (159 aa).

The protein resides in the mitochondrion. This is an uncharacterized protein from Arabidopsis thaliana (Mouse-ear cress).